The following is a 400-amino-acid chain: TBC1 domain family member 13 (400 aa).

Residues 35-345 enclose the Rab-GAP TBC domain; that stretch reads PCEGGLRCLC…RIWDSLFADD (311 aa).

As to quaternary structure, interacts with RAB1A and RAB10; in a GTP-dependent manner.

The protein resides in the membrane. Its subcellular location is the cytoplasm. Acts as a GTPase-activating protein for RAB35. Together with RAB35 may be involved in regulation of insulin-induced glucose transporter SLC2A4/GLUT4 translocation to the plasma membrane in adipocytes. This Homo sapiens (Human) protein is TBC1 domain family member 13 (TBC1D13).